A 42-amino-acid chain; its full sequence is Capsid protein G8P (42 aa).

Residues 1–12 (MGDILTGVSGAE) lie on the Periplasmic side of the membrane. The chain crosses the membrane as a helical span at residues 13–34 (AATAMIAAAAIIALVGFTKWGA). The Cytoplasmic segment spans residues 35–42 (KKVASFFG).

This sequence belongs to the inovirus capsid protein family. In terms of assembly, homomultimerizes. There are several thousands of this protein in the phage capsid.

The protein resides in the virion. Its subcellular location is the host membrane. Its function is as follows. Self assembles to form a helical capsid wrapping up the viral genomic DNA. The capsid displays a filamentous structure with a length of 760-1950 nm and a width of 6-8 nm. The virion assembly and budding take place at the host inner membrane. This is Capsid protein G8P (VIII) from Xanthomonas phage phiLf (Bacteriophage phi-Lf).